The following is a 602-amino-acid chain: MINMCYNFENVKKAYEDQLKNYIKNSLIPNLSSHANNEVVKISMKKLANLGFGYLVDSTLSSITGYYKVRDWIEELLKEELQKSGENKCCNIVLCDYPEEFEISMREIPYYVNKVVKFNGVIISASYPCVLSKKHLYICPKCGRIKEVYFSELFWDDKVFCEFCGGKMEFANVMDYENFQELVVQDLSDESEYYGIEKNPIVWYCGAKPYYFGHVKITGIVREVPRSSKSRIYELIVQAINVEKLGVEKSLINLTEEDVKNIKKVAKRGDIIDILADILIPPLLCDDAIVRKAILIQQIAPYLEDIGKINILLVTEVGIDKTAILKRIGNIPGNNFINIAALKEEELATPYDKRSNILGKFYTVCGGVIPRTLGVLCIDDFNENNKLSTKLSEAFERNVLTTNKGSFYCVPAECSFLCACYPKTKFRKFDQKKSIIKQIGISSILLKNFDLIFPIRDIPDKDRDEEVAKYIFLKYINSDNEEIEGYDYVFVDVGGEKIKIDFEFLKKYVVYSRQITPKITDEVIEKISNWYDEMRKNHYITAKQLNTVIKLSIAVARAKLKECVDEDDVKEAIDIIMHYLKQVVYNPKKGIIDVILLYKNKT.

The region spanning 271–472 (IIDILADILI…RDEEVAKYIF (202 aa)) is the MCM domain. 315–322 (TEVGIDKT) contributes to the ATP binding site.

The protein belongs to the MCM family.

This is an uncharacterized protein from Methanocaldococcus jannaschii (strain ATCC 43067 / DSM 2661 / JAL-1 / JCM 10045 / NBRC 100440) (Methanococcus jannaschii).